Consider the following 517-residue polypeptide: Protein ERGIC-53 (517 aa).

A signal peptide spans 1 to 30 (MAVSRRRGPQAGAQSFFCALLLSFSQFVGS). Over 31–484 (DGMGGDAAAP…DLPAFPSCLS (454 aa)) the chain is Lumenal. The L-type lectin-like domain maps to 52-275 (RRFEYKYSFK…DVLSFLTFQL (224 aa)). 2 residues coordinate a carbohydrate: S96 and D129. D160, F162, D163, N164, D165, N169, and N170 together coordinate Ca(2+). N164 contacts a carbohydrate. H186 contributes to the a carbohydrate binding site. D189 is a binding site for Ca(2+). C198 and C238 are disulfide-bonded. 259–261 (GGL) serves as a coordination point for a carbohydrate. 2 disordered regions span residues 276–297 (TEPG…KEKY) and 377–396 (EISR…SQQE). The span at 278–297 (PGKEPPTPEKDISEKEKEKY) shows a compositional bias: basic and acidic residues. S433 is modified (phosphoserine). A helical membrane pass occupies residues 485 to 505 (TVHFVIFIVVQTVLFIGYIMY). Residues 506-517 (RTQQEAAAKKFF) lie on the Cytoplasmic side of the membrane. Residues 506 to 517 (RTQQEAAAKKFF) form a mediates interaction with RAB3GAP1, RAB3GAP2 and UBXN6 region. Residues 516–517 (FF) carry the ER export motif motif.

Exists both as a covalent disulfide-linked homohexamer, and a complex of three disulfide-linked dimers non-covalently kept together. Interacts with MCFD2. May interact with TMEM115. Interacts with RAB3GAP1 and RAB3GAP2. Interacts with UBXN6. Interacts with SERPINA1/alpha1-antitrypsin. Interacts with BET1.

It localises to the endoplasmic reticulum-Golgi intermediate compartment membrane. The protein localises to the golgi apparatus membrane. The protein resides in the endoplasmic reticulum membrane. Mannose-specific lectin. May recognize sugar residues of glycoproteins, glycolipids, or glycosylphosphatidyl inositol anchors and may be involved in the sorting or recycling of proteins, lipids, or both. The LMAN1-MCFD2 complex forms a specific cargo receptor for the ER-to-Golgi transport of selected proteins. In Rattus norvegicus (Rat), this protein is Protein ERGIC-53 (Lman1).